The following is a 607-amino-acid chain: Chaperone protein DnaK (607 aa).

Residue Thr-174 is modified to Phosphothreonine; by autocatalysis. Positions 577-607 (GYTASGPQGGPNPGGGQSGPDGNVNTDYKVY) are disordered. The segment covering 583-595 (PQGGPNPGGGQSG) has biased composition (gly residues).

Belongs to the heat shock protein 70 family.

Its function is as follows. Acts as a chaperone. The chain is Chaperone protein DnaK from Caldicellulosiruptor bescii (strain ATCC BAA-1888 / DSM 6725 / KCTC 15123 / Z-1320) (Anaerocellum thermophilum).